Here is a 366-residue protein sequence, read N- to C-terminus: Ribosomal RNA large subunit methyltransferase M (366 aa).

Residues Ser188, 221-224 (CPGG), Asp240, Asp260, and Asp277 each bind S-adenosyl-L-methionine. The active-site Proton acceptor is the Lys306.

It belongs to the class I-like SAM-binding methyltransferase superfamily. RNA methyltransferase RlmE family. RlmM subfamily. Monomer.

The protein localises to the cytoplasm. It carries out the reaction cytidine(2498) in 23S rRNA + S-adenosyl-L-methionine = 2'-O-methylcytidine(2498) in 23S rRNA + S-adenosyl-L-homocysteine + H(+). In terms of biological role, catalyzes the 2'-O-methylation at nucleotide C2498 in 23S rRNA. This is Ribosomal RNA large subunit methyltransferase M from Photorhabdus laumondii subsp. laumondii (strain DSM 15139 / CIP 105565 / TT01) (Photorhabdus luminescens subsp. laumondii).